Here is a 65-residue protein sequence, read N- to C-terminus: uncharacterized protein (65 aa).

The disordered stretch occupies residues asparagine 24–aspartate 65.

This is an uncharacterized protein from Dictyostelium discoideum (Social amoeba).